We begin with the raw amino-acid sequence, 333 residues long: Homeobox protein Nkx-3.2 (333 aa).

Disordered regions lie at residues 74 to 121 and 137 to 212; these read PART…RARV and DLEE…SRAA. Residues 137–148 are compositionally biased toward basic and acidic residues; the sequence is DLEEEAPVRSDS. A compositionally biased stretch (gly residues) spans 179 to 191; it reads GAAGSGASGGQAG. Residues 206-265 constitute a DNA-binding region (homeobox); the sequence is KKRSRAAFSHAQVFELERRFNHQRYLSGPERADLAASLKLTETQVKIWFQNRRYKTKRRQ.

The protein belongs to the NK-3 homeobox family. As to expression, expressed widely in mesoderm at the gastroduodenal junction (at protein level). Expressed in visceral mesoderm and embryonic skeleton. Expression is restricted to immature proliferative chondrocytes during endochondral ossification.

It is found in the nucleus. Transcriptional repressor that acts as a negative regulator of chondrocyte maturation. PLays a role in distal stomach development; required for proper antral-pyloric morphogenesis and development of antral-type epithelium. In concert with GSC, defines the structural components of the middle ear; required for tympanic ring and gonium development and in the regulation of the width of the malleus. In Mus musculus (Mouse), this protein is Homeobox protein Nkx-3.2 (Nkx3-2).